A 423-amino-acid polypeptide reads, in one-letter code: uncharacterized protein (423 aa).

This is an uncharacterized protein from Rhizobium meliloti (strain 1021) (Ensifer meliloti).